A 610-amino-acid chain; its full sequence is UvrABC system protein C (610 aa).

In terms of domain architecture, GIY-YIG spans 16-94; that stretch reads SQPGVYRMYD…IKLYQPRYNV (79 aa). The UVR domain occupies 204–239; it reads DQVLTQLIARMEKASQDLAFEEAARIRDQIQAVRRV.

The protein belongs to the UvrC family. In terms of assembly, interacts with UvrB in an incision complex.

It localises to the cytoplasm. The UvrABC repair system catalyzes the recognition and processing of DNA lesions. UvrC both incises the 5' and 3' sides of the lesion. The N-terminal half is responsible for the 3' incision and the C-terminal half is responsible for the 5' incision. The chain is UvrABC system protein C from Salmonella paratyphi A (strain ATCC 9150 / SARB42).